A 347-amino-acid polypeptide reads, in one-letter code: Ribosomal RNA large subunit methyltransferase M (347 aa).

Residues Ser184, 217 to 220, Asp236, Asp256, and Asp272 each bind S-adenosyl-L-methionine; that span reads APGG. Catalysis depends on Lys301, which acts as the Proton acceptor.

This sequence belongs to the class I-like SAM-binding methyltransferase superfamily. RNA methyltransferase RlmE family. RlmM subfamily. As to quaternary structure, monomer.

It localises to the cytoplasm. The enzyme catalyses cytidine(2498) in 23S rRNA + S-adenosyl-L-methionine = 2'-O-methylcytidine(2498) in 23S rRNA + S-adenosyl-L-homocysteine + H(+). Functionally, catalyzes the 2'-O-methylation at nucleotide C2498 in 23S rRNA. The polypeptide is Ribosomal RNA large subunit methyltransferase M (Xanthomonas axonopodis pv. citri (strain 306)).